An 866-amino-acid chain; its full sequence is Phospholipase D gamma 3 (866 aa).

The region spanning 31–170 is the C2 domain; sequence PFDTSSGSLR…CSGNRIEGLF (140 aa). D232 provides a ligand contact to Ca(2+). A PLD phosphodiesterase 1 domain is found at 371-406; that stretch reads TIYTHHQKTMIVDAEAAQNRRKIVAFVGGLDLCNGR. Residues H376, K378, and D383 contribute to the active site. A 1,2-diacyl-sn-glycero-3-phosphate is bound at residue H376. Positions 412 and 444 each coordinate Ca(2+). Q572 serves as a coordination point for a 1,2-diacyl-sn-glycero-3-phosphate. Position 692 is a phosphoserine (S692). In terms of domain architecture, PLD phosphodiesterase 2 spans 712–739; it reads FMIYVHSKGMVVDDEFVLIGSANINQRS. Residues H717, K719, and D724 contribute to the active site. H717 is an a 1,2-diacyl-sn-glycero-3-phosphate binding site. E780 is a binding site for Ca(2+).

This sequence belongs to the phospholipase D family. C2-PLD subfamily. Ca(2+) is required as a cofactor. In terms of tissue distribution, highly expressed in inflorescences and old leaves, moderately in stems, roots, siliques and young leaves and low in flowers.

The protein resides in the cytoplasm. The protein localises to the membrane. The enzyme catalyses a 1,2-diacyl-sn-glycero-3-phosphocholine + H2O = a 1,2-diacyl-sn-glycero-3-phosphate + choline + H(+). Its activity is regulated as follows. Inhibited by neomycin. Functionally, hydrolyzes glycerol-phospholipids at the terminal phosphodiesteric bond to generate phosphatidic acids (PA). Plays an important role in various cellular processes, including phytohormone action, vesicular trafficking, secretion, cytoskeletal arrangement, meiosis, tumor promotion, pathogenesis, membrane deterioration and senescence. Can use phosphatidylserine but prefers ethanolamine-containing lipids as substrates. The protein is Phospholipase D gamma 3 of Arabidopsis thaliana (Mouse-ear cress).